A 313-amino-acid polypeptide reads, in one-letter code: Putative S-adenosyl-L-methionine-dependent methyltransferase MAV_5149 (313 aa).

S-adenosyl-L-methionine-binding positions include aspartate 135 and 164 to 165; that span reads DL.

Belongs to the UPF0677 family.

In terms of biological role, exhibits S-adenosyl-L-methionine-dependent methyltransferase activity. This Mycobacterium avium (strain 104) protein is Putative S-adenosyl-L-methionine-dependent methyltransferase MAV_5149.